The chain runs to 452 residues: MQRRIMGIETEFGVTCTFHGHRRLSPDEVARYLFRRVVSWGRSSNVFLQNGARLYLDVGSHPEYATAECDSLIQLINHDRAGELVLEDLLVDAEQRLSDEGIGGDIYLFKNNTDSAGNSYGCHENYLVVRAGEFSRISDVLLPFLVTRQLICGAGKVLQTPKAATFCLSQRAEHIWEGVSSATTRSRPIINTRDEPHADAEKYRRLHVIVGDSNMSEMTTLLKVGSAALVLEMIEAGVVFRDFALDNPIRAIREASHDPTGRRPVRLAGGRQASALDIQREYHARAVEHMTNRRPDPEMDMVVDLWGRMLDAVERDDFSKVDTEVDWVIKRKLFQRYQDKYSMELSDPKIAQLDLAFHDIKRGRGVFDVLSRKGLVTRATTDEAIATAVNEPPQTTRAKLRGDFISAAQKAGRDFTVDWVHLKLNDQAQRTVLCKDPFRSVDERVDRLIASM.

Glutamate 9 lines the Mg(2+) pocket. ATP is bound at residue arginine 53. A Mg(2+)-binding site is contributed by tyrosine 55. Residue aspartate 57 is the Proton acceptor of the active site. Glutamate 63 serves as a coordination point for Mg(2+). Residues threonine 66 and tryptophan 419 each coordinate ATP.

The protein belongs to the Pup ligase/Pup deamidase family. Pup-conjugating enzyme subfamily.

The enzyme catalyses ATP + [prokaryotic ubiquitin-like protein]-L-glutamate + [protein]-L-lysine = ADP + phosphate + N(6)-([prokaryotic ubiquitin-like protein]-gamma-L-glutamyl)-[protein]-L-lysine.. The protein operates within protein degradation; proteasomal Pup-dependent pathway. Its pathway is protein modification; protein pupylation. Catalyzes the covalent attachment of the prokaryotic ubiquitin-like protein modifier Pup to the proteasomal substrate proteins, thereby targeting them for proteasomal degradation. This tagging system is termed pupylation. The ligation reaction involves the side-chain carboxylate of the C-terminal glutamate of Pup and the side-chain amino group of a substrate lysine. The sequence is that of Pup--protein ligase from Gordonia bronchialis (strain ATCC 25592 / DSM 43247 / BCRC 13721 / JCM 3198 / KCTC 3076 / NBRC 16047 / NCTC 10667) (Rhodococcus bronchialis).